We begin with the raw amino-acid sequence, 892 residues long: Exo-beta-D-glucosaminidase (892 aa).

A signal peptide spans methionine 1–alanine 18. Positions alanine 19–lysine 28 are excised as a propeptide. N-linked (GlcNAc...) asparagine glycans are attached at residues asparagine 196, asparagine 336, and asparagine 440. Residue aspartate 464 is the Proton donor of the active site. Glutamate 539 acts as the Nucleophile in catalysis. N-linked (GlcNAc...) asparagine glycans are attached at residues asparagine 557, asparagine 578, asparagine 689, and asparagine 825.

Belongs to the glycosyl hydrolase 2 family. As to quaternary structure, monomer.

It is found in the secreted. Its subcellular location is the extracellular space. The catalysed reaction is Hydrolysis of chitosan or chitosan oligosaccharides to remove successive D-glucosamine residues from the non-reducing termini.. Hydrolyzes chitosan and chitooligosaccharides with retention of anomeric configuration. Has no activity against beta-D-galactoside, beta-D-glucuronide, beta-D-mannoside, chitin, glycol chitosan, cellulose, N,N'-diacetylchitibiose and pNP-GlcNAc. This chain is Exo-beta-D-glucosaminidase, found in Hypocrea jecorina (Trichoderma reesei).